The sequence spans 199 residues: Superoxide dismutase [Mn/Fe] (199 aa).

H27, H81, D161, and H165 together coordinate Fe(3+). Mn(2+) contacts are provided by H27, H81, D161, and H165.

The protein belongs to the iron/manganese superoxide dismutase family. As to quaternary structure, homodimer. Mn(2+) is required as a cofactor. Fe(3+) serves as cofactor.

The enzyme catalyses 2 superoxide + 2 H(+) = H2O2 + O2. Functionally, destroys superoxide anion radicals which are normally produced within the cells and which are toxic to biological systems. Catalyzes the dismutation of superoxide anion radicals into O2 and H2O2 by successive reduction and oxidation of the transition metal ion at the active site. This chain is Superoxide dismutase [Mn/Fe] (sodA), found in Staphylococcus haemolyticus (strain JCSC1435).